Reading from the N-terminus, the 249-residue chain is Adenosylcobinamide-GDP ribazoletransferase (249 aa).

6 consecutive transmembrane segments (helical) span residues 36 to 56, 57 to 77, 106 to 126, 133 to 153, 188 to 208, and 226 to 246; these read LVGF…HSIG, LNLA…GGLH, VGAM…AFLF, KLTA…LAIT, LWLF…ITWL, and GALG…GQQI.

The protein belongs to the CobS family. Requires Mg(2+) as cofactor.

It localises to the cell membrane. The catalysed reaction is alpha-ribazole + adenosylcob(III)inamide-GDP = adenosylcob(III)alamin + GMP + H(+). It catalyses the reaction alpha-ribazole 5'-phosphate + adenosylcob(III)inamide-GDP = adenosylcob(III)alamin 5'-phosphate + GMP + H(+). The protein operates within cofactor biosynthesis; adenosylcobalamin biosynthesis; adenosylcobalamin from cob(II)yrinate a,c-diamide: step 7/7. Its function is as follows. Joins adenosylcobinamide-GDP and alpha-ribazole to generate adenosylcobalamin (Ado-cobalamin). Also synthesizes adenosylcobalamin 5'-phosphate from adenosylcobinamide-GDP and alpha-ribazole 5'-phosphate. This is Adenosylcobinamide-GDP ribazoletransferase from Desulforamulus reducens (strain ATCC BAA-1160 / DSM 100696 / MI-1) (Desulfotomaculum reducens).